The chain runs to 382 residues: MIKSALLVLEDGTQFHGRAIGATGSAVGEVVFNTSMTGYQEILTDPSYSRQIVTLTYPHIGNVGTNEADEESSQVHAQGLVIRDLPLIASNFRNTEDLSSYLKRHNIVAIADIDTRKLTRLLREKGAQNGCIIAGDSPDAKLALEKAKAFPGLNGMDLAKEVTTAETYRWTQGSWTLKDGLPEAKSEDDLPFHVVAYDFGAKRNILRMLVDRGCRLTVVPAQTSAEEVLKMNPDGIFLSNGPSDPAPCDYAIEAIKKFLQTDIPVFGICLGHQLLALASGAKTVKMKFGHHGGNHPVKDMDRNVVMITAQNHGFAVDEDSLPANLRVTHKSLFDGTLQGIHRTDKPAFSFQGHPEASPGPHDAAPLFDHFIELIKHYRSSAK.

Residues 1-189 (MIKSALLVLE…GLPEAKSEDD (189 aa)) are CPSase. Residues serine 47 and glycine 241 each contribute to the L-glutamine site. The 188-residue stretch at 193 to 380 (HVVAYDFGAK…IELIKHYRSS (188 aa)) folds into the Glutamine amidotransferase type-1 domain. The active-site Nucleophile is cysteine 269. L-glutamine is bound by residues leucine 270, glutamine 273, asparagine 311, glycine 313, and phenylalanine 314. Catalysis depends on residues histidine 353 and glutamate 355.

Belongs to the CarA family. Composed of two chains; the small (or glutamine) chain promotes the hydrolysis of glutamine to ammonia, which is used by the large (or ammonia) chain to synthesize carbamoyl phosphate. Tetramer of heterodimers (alpha,beta)4.

The catalysed reaction is hydrogencarbonate + L-glutamine + 2 ATP + H2O = carbamoyl phosphate + L-glutamate + 2 ADP + phosphate + 2 H(+). It carries out the reaction L-glutamine + H2O = L-glutamate + NH4(+). It functions in the pathway amino-acid biosynthesis; L-arginine biosynthesis; carbamoyl phosphate from bicarbonate: step 1/1. Its pathway is pyrimidine metabolism; UMP biosynthesis via de novo pathway; (S)-dihydroorotate from bicarbonate: step 1/3. Its function is as follows. Small subunit of the glutamine-dependent carbamoyl phosphate synthetase (CPSase). CPSase catalyzes the formation of carbamoyl phosphate from the ammonia moiety of glutamine, carbonate, and phosphate donated by ATP, constituting the first step of 2 biosynthetic pathways, one leading to arginine and/or urea and the other to pyrimidine nucleotides. The small subunit (glutamine amidotransferase) binds and cleaves glutamine to supply the large subunit with the substrate ammonia. This Salmonella typhi protein is Carbamoyl phosphate synthase small chain.